Reading from the N-terminus, the 105-residue chain is Large ribosomal subunit protein bL21 (105 aa).

Belongs to the bacterial ribosomal protein bL21 family. Part of the 50S ribosomal subunit. Contacts protein L20.

Its function is as follows. This protein binds to 23S rRNA in the presence of protein L20. This chain is Large ribosomal subunit protein bL21, found in Treponema pallidum (strain Nichols).